Reading from the N-terminus, the 146-residue chain is Hemoglobin subunit beta (146 aa).

The 145-residue stretch at 2-146 (HWSAEEKQLI…VAHSLARVYH (145 aa)) folds into the Globin domain. Positions 63 and 92 each coordinate heme b.

Belongs to the globin family. In terms of assembly, heterotetramer of two alpha chains and two beta chains. In terms of tissue distribution, red blood cells.

Its function is as follows. Involved in oxygen transport from the lung to the various peripheral tissues. The sequence is that of Hemoglobin subunit beta (HBB) from Microcephalophis gracilis (Graceful small-headed sea snake).